Reading from the N-terminus, the 380-residue chain is MTIMRKNHPLLKIINNSFIDLPTPCNISSWWNFGSLLGICLMVQIITGLFLAMHYTSDTATAFSSVAHICRDVNYGWLIRYMHANGASMFFICLFIHVGRGIYYGSYMLSETWNIGIALFLTTMATAFVGYVLPWGQMSFWGATVITNLLSAIPYIGSTLVEWIWGGFSVDKATLTRFFAFHFILPFIITAFVLVHLLFLHETGSNNPSGLNSDSDKIPFHPYYTIKDILGILMLLMVLMILVLFFPDVLGDPDNYTPANPLNTPAHIKPEWYSSLAYAILRSIPNKLGGVTALILSILILAMFPLINSSKLLGLVYRPITQAMYWIFIANLFILTWIGGQPVEYPFTMIGLISSILYFSIIVMFMFIASMIENNILKSH.

4 consecutive transmembrane segments (helical) span residues 33–53 (FGSL…FLAM), 77–98 (WLIR…FIHV), 113–133 (WNIG…GYVL), and 178–198 (FFAF…VHLL). Heme b-binding residues include histidine 83 and histidine 97. 2 residues coordinate heme b: histidine 182 and histidine 196. Histidine 201 serves as a coordination point for a ubiquinone. The next 4 membrane-spanning stretches (helical) occupy residues 226–246 (IKDI…VLFF), 288–308 (LGGV…PLIN), 320–340 (ITQA…WIGG), and 347–367 (FTMI…MFMF).

The protein belongs to the cytochrome b family. As to quaternary structure, the cytochrome bc1 complex contains 11 subunits: 3 respiratory subunits (MT-CYB, CYC1 and UQCRFS1), 2 core proteins (UQCRC1 and UQCRC2) and 6 low-molecular weight proteins (UQCRH/QCR6, UQCRB/QCR7, UQCRQ/QCR8, UQCR10/QCR9, UQCR11/QCR10 and a cleavage product of UQCRFS1). This cytochrome bc1 complex then forms a dimer. Requires heme b as cofactor.

Its subcellular location is the mitochondrion inner membrane. Its function is as follows. Component of the ubiquinol-cytochrome c reductase complex (complex III or cytochrome b-c1 complex) that is part of the mitochondrial respiratory chain. The b-c1 complex mediates electron transfer from ubiquinol to cytochrome c. Contributes to the generation of a proton gradient across the mitochondrial membrane that is then used for ATP synthesis. This is Cytochrome b (MT-CYB) from Calomys musculinus (Drylands vesper mouse).